The sequence spans 279 residues: MDLATKYFNQINWRYVDHSSGLEPMQSFAFDDTFSESVGKDLSCNVVRTWIHQHTVILGIHDSRLPFLSDGIRFLTDEQGYNAIVRNSGGLGVVLDQGILNISLIFKGQTETTIDEAFTVMYLLISKMFEDEDVSIDTKEIEQSYCPGKFDLSINDKKFAGISQRRVRGGIAVQIYLCIEGSGSERALMMQQFYQRALKGQTTKFHYPDIDPSCMASLETLLNREIKVQDVMFLLLYALKDLGANLNMDPITEDEWTRYEGYYDKMLERNAKINEKLDF.

In terms of domain architecture, BPL/LPL catalytic spans 41–247 (DLSCNVVRTW…ALKDLGANLN (207 aa)). Cys146 serves as the catalytic Acyl-thioester intermediate.

This sequence belongs to the octanoyltransferase LipL family.

The catalysed reaction is N(6)-octanoyl-L-lysyl-[glycine-cleavage complex H protein] + L-lysyl-[lipoyl-carrier protein] = N(6)-octanoyl-L-lysyl-[lipoyl-carrier protein] + L-lysyl-[glycine-cleavage complex H protein]. The protein operates within protein modification; protein lipoylation via endogenous pathway; protein N(6)-(lipoyl)lysine from octanoyl-[acyl-carrier-protein]. Functionally, catalyzes the amidotransfer (transamidation) of the octanoyl moiety from octanoyl-GcvH to the lipoyl domain of the E2 subunit of lipoate-dependent enzymes. This is Octanoyl-[GcvH]:protein N-octanoyltransferase from Staphylococcus epidermidis (strain ATCC 35984 / DSM 28319 / BCRC 17069 / CCUG 31568 / BM 3577 / RP62A).